A 582-amino-acid chain; its full sequence is MKVHIQQLLEQAIVCLIKQEIIPADIQPRINIDRTKDKSHGDYANNLALMLAKPAKQNPRHLAELIIANIPESTLVIKMEIAGPGFINFFINPNFLEKQIDGAYLDKRLNVQIEANPQTIVIDYSSPNLAKEMHVGHLRSSIIGDAVARTLEFKGNNVVRQNHVGDWGTQFGMLLAYMEELRAKGEPIENNLANLEIFYRAAKGRFDESEDFATRARHLVVKLQGGNKDCLKLWAKFNETSLSHCQETYQRLGVSLTRADVRGESSYNDQLAVVVEDLDKQGLLQQSQGAKCVFLDNFKNKEGDPLPVIIQKKDGGFLYATSDLAAMRYRQNELNADRILYFVDARQGLHFQQVFEVARSAGFVNEKTSLEHMPFGTVMGEDGRPFKTRSGAVAKLADLLTEAEVRAYELVKEKNKEMSEPELRHIASVVGISSVKYADLSKNRTSDYTFSFDSMLSFEGNTAPYLLYAYTRVVSIFNKAGIEMGSVTAAVSLTQEKEIDLANKLIQFNDIIDQVAKQGMPHFLCSYLFELAGLFSSFYEACPILIAETETQKQSRLKLAGLTAKTLKQGLSLLGINTLERM.

Positions 127-137 (PNLAKEMHVGH) match the 'HIGH' region motif.

It belongs to the class-I aminoacyl-tRNA synthetase family. In terms of assembly, monomer.

It is found in the cytoplasm. The enzyme catalyses tRNA(Arg) + L-arginine + ATP = L-arginyl-tRNA(Arg) + AMP + diphosphate. The protein is Arginine--tRNA ligase of Psychromonas ingrahamii (strain DSM 17664 / CCUG 51855 / 37).